A 480-amino-acid polypeptide reads, in one-letter code: Protein nucleotidyltransferase YdiU (480 aa).

The ATP site is built by glycine 86, glycine 88, arginine 89, lysine 109, aspartate 121, glycine 122, arginine 172, and arginine 179. The active-site Proton acceptor is the aspartate 248. Residues asparagine 249 and aspartate 258 each contribute to the Mg(2+) site. An ATP-binding site is contributed by aspartate 258.

This sequence belongs to the SELO family. It depends on Mg(2+) as a cofactor. Requires Mn(2+) as cofactor.

It carries out the reaction L-seryl-[protein] + ATP = 3-O-(5'-adenylyl)-L-seryl-[protein] + diphosphate. It catalyses the reaction L-threonyl-[protein] + ATP = 3-O-(5'-adenylyl)-L-threonyl-[protein] + diphosphate. The enzyme catalyses L-tyrosyl-[protein] + ATP = O-(5'-adenylyl)-L-tyrosyl-[protein] + diphosphate. The catalysed reaction is L-histidyl-[protein] + UTP = N(tele)-(5'-uridylyl)-L-histidyl-[protein] + diphosphate. It carries out the reaction L-seryl-[protein] + UTP = O-(5'-uridylyl)-L-seryl-[protein] + diphosphate. It catalyses the reaction L-tyrosyl-[protein] + UTP = O-(5'-uridylyl)-L-tyrosyl-[protein] + diphosphate. In terms of biological role, nucleotidyltransferase involved in the post-translational modification of proteins. It can catalyze the addition of adenosine monophosphate (AMP) or uridine monophosphate (UMP) to a protein, resulting in modifications known as AMPylation and UMPylation. This is Protein nucleotidyltransferase YdiU from Salmonella choleraesuis (strain SC-B67).